We begin with the raw amino-acid sequence, 237 residues long: UDP-2,3-diacylglucosamine hydrolase (237 aa).

5 residues coordinate Mn(2+): aspartate 9, histidine 11, aspartate 42, asparagine 80, and histidine 115. 80-81 (NR) contacts substrate. Substrate-binding residues include aspartate 123, serine 161, lysine 165, lysine 168, and histidine 196. Residues histidine 196 and histidine 198 each coordinate Mn(2+).

This sequence belongs to the LpxH family. The cofactor is Mn(2+).

The protein resides in the cell inner membrane. It is found in the cytoplasm. The enzyme catalyses UDP-2-N,3-O-bis[(3R)-3-hydroxytetradecanoyl]-alpha-D-glucosamine + H2O = 2-N,3-O-bis[(3R)-3-hydroxytetradecanoyl]-alpha-D-glucosaminyl 1-phosphate + UMP + 2 H(+). It functions in the pathway glycolipid biosynthesis; lipid IV(A) biosynthesis; lipid IV(A) from (3R)-3-hydroxytetradecanoyl-[acyl-carrier-protein] and UDP-N-acetyl-alpha-D-glucosamine: step 4/6. In terms of biological role, hydrolyzes the pyrophosphate bond of UDP-2,3-diacylglucosamine to yield 2,3-diacylglucosamine 1-phosphate (lipid X) and UMP by catalyzing the attack of water at the alpha-P atom. Involved in the biosynthesis of lipid A, a phosphorylated glycolipid that anchors the lipopolysaccharide to the outer membrane of the cell. The protein is UDP-2,3-diacylglucosamine hydrolase of Haemophilus influenzae (strain ATCC 51907 / DSM 11121 / KW20 / Rd).